Consider the following 212-residue polypeptide: Suppressor of cytokine signaling 1 (212 aa).

Residues Met1–His55 are disordered. Positions Pro25–Ala36 are enriched in low complexity. Positions Pro37 to Ala50 are enriched in pro residues. A kinase inhibitory region (KIR) region spans residues Phe56–Arg67. Residues Ile68–Gly79 form an extended SH2 subdomain (ESS) region. The SH2 domain occupies Phe80 to Leu175. The 50-residue stretch at Met162–Gln211 folds into the SOCS box domain. Residues Pro174–Ile183 form an interaction with Elongin BC complex region.

The protein belongs to the SOCS1 family. Interacts with multiple activated proteins of the tyrosine kinase signaling pathway including JAK family kinases, TEC, KIT, GRB2 and VAV. Binding to JAKs is mediated through the KIR and SH2 domain to a phosphorylated tyrosine residue within the JAK JH1 domain. Binds the SH3 domain of GRB2 via diproline determinants in the N-terminus, and the N-terminal regulatory domain of VAV. Interacts with the Elongin BC complex (ELOB and ELOC). Component of an ECS CBC(SOCS1) E3 ubiquitin-protein ligase complex which contains Elongin BC, CUL5, RBX1 and SOCS1. Interacts (via SH2 domain and SOCS box) with TRIM8. Interacts with CUL2. Interacts with AXL and FGFR3. Interacts with INSR. Interacts with TRIM8. Interacts with DCUN1D1. Interacts with IFNGR1. As to expression, high expression in thymus. Lower expression in lung and spleen. Expressed in both Th1 and Th2 cells.

The protein resides in the nucleus. The protein localises to the cytoplasmic vesicle. It functions in the pathway protein modification; protein ubiquitination. Essential negative regulator of type I and type II interferon (IFN) signaling, as well as that of other cytokines, including IL2, IL4, IL6 and leukemia inhibitory factor (LIF). Downregulates cytokine signaling by inhibiting the JAK/STAT signaling pathway. Acts by binding to JAK proteins and to IFNGR1 and inhibiting their kinase activity. In vitro, suppresses Tec protein-tyrosine activity. Regulates IFN-gamma (IFNG)-mediated sensory neuron survival. Probable substrate recognition component of an ECS (Elongin BC-CUL2/5-SOCS-box protein) E3 ubiquitin ligase complex which mediates the ubiquitination and subsequent proteasomal degradation of target proteins. This chain is Suppressor of cytokine signaling 1, found in Mus musculus (Mouse).